The primary structure comprises 165 residues: Inorganic pyrophosphatase (165 aa).

Substrate contacts are provided by lysine 21, arginine 35, and tyrosine 47. Positions 57, 62, and 94 each coordinate Mg(2+). Substrate is bound at residue tyrosine 131.

This sequence belongs to the PPase family. Homotrimer. In presence of divalent cations the trimers aggregate to form a hexamer. Mg(2+) serves as cofactor.

Its subcellular location is the cytoplasm. It catalyses the reaction diphosphate + H2O = 2 phosphate + H(+). Its function is as follows. Catalyzes the hydrolysis of inorganic pyrophosphate (PPi) forming two phosphate ions. The chain is Inorganic pyrophosphatase from Bacillus sp. (strain PS3).